The primary structure comprises 1463 residues: Collagen alpha-1(I) chain (1463 aa).

The signal sequence occupies residues 1–22 (MFSFVDLRLLLLLAATALLTHG). A propeptide spans 23 to 161 (QEEGQEEGQE…PPGLGGNFAP (139 aa)) (N-terminal propeptide). A VWFC domain is found at 38 to 96 (VTCVQNGLRYHDRDVWKPVPCQICVCDNGNVLCDDVICDELKDCPNAKVPTDECCPVCP). The interval 98–1217 (GQESPTDQET…AHDGGRYYRA (1120 aa)) is disordered. The segment covering 138-153 (PGLPGPPGPPGPPGPP) has biased composition (pro residues). Glutamine 162 carries the pyrrolidone carboxylic acid modification. The interval 162-177 (QLSYGYDEKSTGISVP) is nonhelical region (N-terminal). The residue at position 170 (lysine 170) is an Allysine. Serine 171 carries the phosphoserine modification. The segment at 178 to 1191 (GPMGPSGPRG…PGPPGPPGPP (1014 aa)) is triple-helical region. A 4-hydroxyproline mark is found at proline 189, proline 192, proline 195, proline 204, proline 207, proline 210, proline 225, proline 240, proline 246, proline 255, and proline 261. Over residues 197-216 (PQGFQGPPGEPGEPGASGPM) the composition is skewed to low complexity. Residues 228–242 (NGDDGEAGKPGRPGE) are compositionally biased toward basic and acidic residues. Position 264 is a 5-hydroxylysine; alternate (lysine 264). Lysine 264 is a glycosylation site (O-linked (Gal...) hydroxylysine; alternate). Phosphoserine is present on serine 270. 2 positions are modified to 5-hydroxylysine: lysine 276 and lysine 285. The segment covering 278–294 (DAGPAGPKGEPGSPGEN) has biased composition (low complexity). A 4-hydroxyproline mark is found at proline 288, proline 291, proline 297, proline 306, and proline 312. A compositionally biased stretch (low complexity) spans 317–330 (PAGARGNDGATGAA). Residues 332–344 (PPGPTGPAGPPGF) are compositionally biased toward pro residues. Proline 333, proline 342, and proline 345 each carry 4-hydroxyproline. The segment covering 349–358 (GAKGEGGPQG) has biased composition (gly residues). 4-hydroxyproline occurs at positions 372, 375, 387, 393, 402, 408, 411, and 426. The segment covering 378-417 (AGAAGPAGNPGADGQPGAKGANGAPGIAGAPGFPGARGPS) has biased composition (low complexity). Lysine 429 bears the 5-hydroxylysine mark. Proline 435, proline 438, proline 450, proline 459, proline 474, proline 480, proline 489, and proline 495 each carry 4-hydroxyproline. Residues 484–493 (GERGGPGSRG) are compositionally biased toward gly residues. The span at 494–525 (FPGADGVAGPKGPAGERGAPGPAGPKGSPGEA) shows a compositional bias: low complexity. Lysine 504 is subject to 5-hydroxylysine. 4-hydroxyproline occurs at positions 513, 522, 528, 534, 543, 546, 555, 564, 570, 582, 591, 600, 603, 621, 639, 645, 651, 657, 663, 669, 681, 690, 702, 714, 717, 723, 729, and 738. Residues 537-563 (KGLTGSPGSPGPDGKTGPPGPAGQDGR) are compositionally biased toward low complexity. Residues 572-591 (ARGQAGVMGFPGPKGAAGEP) show a composition bias toward low complexity. A compositionally biased stretch (low complexity) spans 633 to 660 (QGPAGSPGFQGLPGPAGPPGEAGKPGEQ). Over residues 695 to 723 (PRGANGAPGNDGAKGDAGAPGAPGSQGAP) the composition is skewed to low complexity. Residues 744–746 (RGD) carry the Cell attachment site motif. Lysine 750 is subject to 5-hydroxylysine. 4-hydroxyproline occurs at positions 756, 771, and 777. Residues 783–797 (AGPSGPAGPTGARGA) are compositionally biased toward low complexity. The residue at position 786 (serine 786) is a Phosphoserine. 4-hydroxyproline is present on residues proline 798, proline 804, proline 807, proline 816, proline 822, proline 840, proline 849, and proline 858. A compositionally biased stretch (low complexity) spans 810–837 (AGFAGPPGADGQPGAKGEPGDAGAKGDA). Residues 839-851 (PPGPAGPAGPPGP) are compositionally biased toward pro residues. Residues 852–882 (IGNVGAPGPKGARGSAGPPGATGFPGAAGRV) are compositionally biased toward low complexity. The residue at position 861 (lysine 861) is a 5-hydroxylysine. 4-hydroxyproline is present on residues proline 870 and proline 876. At proline 884 the chain carries 3-hydroxyproline. 4-hydroxyproline occurs at positions 885, 894, 897, 918, 927, 936, 945, 963, 972, 975, 981, 996, 1002, 1008, 1017, and 1023. Residues 930-954 (AGEKGAPGADGPAGAPGTPGPQGIA) are compositionally biased toward low complexity. A compositionally biased stretch (pro residues) spans 995 to 1005 (PPGPMGPPGLA). 5-hydroxylysine is present on lysine 1032. Pro residues predominate over residues 1041–1056 (AGPPGAPGAPGAPGPV). 3 positions are modified to 4-hydroxyproline: proline 1044, proline 1047, and proline 1050. Residues 1077-1091 (IGPVGARGPAGPQGP) show a composition bias toward low complexity. A Cell attachment site motif is present at residues 1092–1094 (RGD). Positions 1092 to 1106 (RGDKGETGEQGDRGI) are enriched in basic and acidic residues. Lysine 1095 is subject to 5-hydroxylysine. Lysine 1107 carries the post-translational modification 5-hydroxylysine; alternate. Lysine 1107 carries an O-linked (Gal...) hydroxylysine; alternate glycan. 4-hydroxyproline is present on residues proline 1119, proline 1122, proline 1125, proline 1143, and proline 1158. Residues 1125–1149 (PGEQGPSGASGPAGPRGPPGSAGSP) show a composition bias toward low complexity. Position 1163 is a 3-hydroxyproline (proline 1163). The residue at position 1164 (proline 1164) is a 4-hydroxyproline. A compositionally biased stretch (pro residues) spans 1176 to 1191 (AGPPGPPGPPGPPGPP). Proline 1178 bears the 3-hydroxyproline mark. At proline 1179 the chain carries 4-hydroxyproline. 3-hydroxyproline is present on proline 1181. Proline 1182 bears the 4-hydroxyproline mark. Proline 1184 carries the 3-hydroxyproline modification. A 4-hydroxyproline mark is found at proline 1185, proline 1188, and proline 1191. Residues 1192 to 1215 (SGGYDLSFLPQPPQEKAHDGGRYY) form a nonhelical region (C-terminal) region. Residues 1206 to 1217 (EKAHDGGRYYRA) are compositionally biased toward basic and acidic residues. Lysine 1207 is subject to Allysine. Positions 1218–1463 (DDANVVRDRD…GFDVGPACFL (246 aa)) are cleaved as a propeptide — C-terminal propeptide. The Fibrillar collagen NC1 domain maps to 1228–1463 (LEVDTTLKSL…GFDVGPACFL (236 aa)). 3 disulfide bridges follow: cysteine 1258–cysteine 1290, cysteine 1298–cysteine 1461, and cysteine 1369–cysteine 1414. Residues aspartate 1276, asparagine 1278, glutamine 1279, cysteine 1281, and aspartate 1284 each coordinate Ca(2+).

Belongs to the fibrillar collagen family. As to quaternary structure, trimers of one alpha 2(I) and two alpha 1(I) chains. Interacts with MRC2. Interacts with TRAM2. Interacts with MFAP4 in a Ca (2+)-dependent manner. In terms of processing, contains mostly 4-hydroxyproline. Proline residues at the third position of the tripeptide repeating unit (G-X-Y) are hydroxylated in some or all of the chains. Contains 3-hydroxyproline at a few sites. This modification occurs on the first proline residue in the sequence motif Gly-Pro-Hyp, where Hyp is 4-hydroxyproline. Post-translationally, lysine residues at the third position of the tripeptide repeating unit (G-X-Y) are 5-hydroxylated in some or all of the chains. In terms of processing, O-glycosylated on hydroxylated lysine residues. The O-linked glycan consists of a Glc-Gal disaccharide. As to expression, forms the fibrils of tendon, ligaments and bones. In bones the fibrils are mineralized with calcium hydroxyapatite.

The protein localises to the secreted. The protein resides in the extracellular space. Its subcellular location is the extracellular matrix. Type I collagen is a member of group I collagen (fibrillar forming collagen). This chain is Collagen alpha-1(I) chain (COL1A1), found in Bos taurus (Bovine).